Reading from the N-terminus, the 166-residue chain is Endoribonuclease YbeY (166 aa).

H111, H115, and H121 together coordinate Zn(2+). The tract at residues 140–166 (ELGYPDPYADDESADPPHSDTPSKDHE) is disordered. Over residues 154-166 (DPPHSDTPSKDHE) the composition is skewed to basic and acidic residues.

Belongs to the endoribonuclease YbeY family. The cofactor is Zn(2+).

The protein resides in the cytoplasm. Single strand-specific metallo-endoribonuclease involved in late-stage 70S ribosome quality control and in maturation of the 3' terminus of the 16S rRNA. This chain is Endoribonuclease YbeY, found in Pseudomonas syringae pv. syringae (strain B728a).